Consider the following 406-residue polypeptide: Acetyltransferase sirH (406 aa).

6 helical membrane-spanning segments follow: residues 9-29 (IFIE…FALG), 32-52 (AHTF…CQSL), 63-83 (LLSN…WILL), 295-315 (VQLF…ALLC), 323-343 (SALF…HVIA), and 358-378 (FIGF…WVGS).

The protein belongs to the wax synthase family.

Its subcellular location is the membrane. It participates in mycotoxin biosynthesis. Acetyltransferase; part of the gene cluster that mediates the biosynthesis of sirodesmin PL, an epipolythiodioxopiperazine (ETP) characterized by a disulfide bridged cyclic dipeptide and that acts as a phytotoxin which is involved in the blackleg didease of canola. SirD catalyzes the O-prenylation of L-tyrosine (L-Tyr) in the presence of dimethylallyl diphosphate (DMAPP) to yield 4-O-dimethylallyl-L-Tyr, and therefore represents probably the first pathway-specific enzyme in the biosynthesis of sirodesmin PL. 4-O-dimethylallyl-L-Tyr, then undergoes condensation with L-Ser in a reaction catalyzed by the non-ribosomal peptide synthase sirP to form the diketopiperazine (DKP) backbone. Further bishydroxylation of the DKP performed by the cytochrome P450 monooxygenase sirC leads to the production of the intermediate phomamide. This step is essential to form the reactive thiol group required for toxicity of sirodesmin PL. The next steps of sirodesmin biosynthesis are not well understood yet, but some predictions could be made from intermediate compounds identification. Phomamide is converted into phomalizarine via oxidation, probably by sirT. Further oxidation, methylation (by sirM or sirN) and reduction steps convert phomalizarine to deacetyl sirodesmin. Finally, acetyltransferase sirH probably acetylates deacetyl sirodesmin to produce sirodesmin PL. The chain is Acetyltransferase sirH from Leptosphaeria maculans (Blackleg fungus).